A 339-amino-acid chain; its full sequence is Anthranilate phosphoribosyltransferase (339 aa).

5-phospho-alpha-D-ribose 1-diphosphate contacts are provided by residues Gly-86, 89–90, Thr-94, 96–99, 114–122, and Ser-126; these read GD, NIST, and KHGNRGVSS. Residue Gly-86 coordinates anthranilate. Ser-98 is a binding site for Mg(2+). Residue Asn-117 participates in anthranilate binding. Arg-172 serves as a coordination point for anthranilate. Positions 230 and 231 each coordinate Mg(2+).

Belongs to the anthranilate phosphoribosyltransferase family. Homodimer. Requires Mg(2+) as cofactor.

It carries out the reaction N-(5-phospho-beta-D-ribosyl)anthranilate + diphosphate = 5-phospho-alpha-D-ribose 1-diphosphate + anthranilate. It participates in amino-acid biosynthesis; L-tryptophan biosynthesis; L-tryptophan from chorismate: step 2/5. Catalyzes the transfer of the phosphoribosyl group of 5-phosphorylribose-1-pyrophosphate (PRPP) to anthranilate to yield N-(5'-phosphoribosyl)-anthranilate (PRA). The sequence is that of Anthranilate phosphoribosyltransferase from Photobacterium profundum (strain SS9).